The primary structure comprises 227 residues: UPF0758 protein lpp2553 (227 aa).

The region spanning 102–225 is the MPN domain; that stretch reads RLSNTQQTYA…YSIFAENKWV (124 aa). Residues histidine 173, histidine 175, and aspartate 186 each coordinate Zn(2+). A JAMM motif motif is present at residues 173-186; the sequence is HNHPSGLSDASQQD.

Belongs to the UPF0758 family.

This chain is UPF0758 protein lpp2553, found in Legionella pneumophila (strain Paris).